Reading from the N-terminus, the 289-residue chain is mRNA-capping enzyme small subunit (289 aa).

Heterodimer of a large and a small subunit.

The protein localises to the virion. The enzyme catalyses a 5'-end (5'-triphosphoguanosine)-ribonucleoside in mRNA + S-adenosyl-L-methionine = a 5'-end (N(7)-methyl 5'-triphosphoguanosine)-ribonucleoside in mRNA + S-adenosyl-L-homocysteine. Catalyzes the last reaction in the mRNA cap formation pathway. The chain is mRNA-capping enzyme small subunit from Fowlpox virus (strain NVSL) (FPV).